The primary structure comprises 291 residues: Small ribosomal subunit protein uS2 (291 aa).

Acidic residues predominate over residues 238–247 (DEESGDELDE). The disordered stretch occupies residues 238–291 (DEESGDELDESVSLHEEGREITDYENYTPPEEREYSVNDEGDVFDEDESLYEGR). A compositionally biased stretch (basic and acidic residues) spans 249-259 (VSLHEEGREIT). The span at 274–291 (VNDEGDVFDEDESLYEGR) shows a compositional bias: acidic residues.

The protein belongs to the universal ribosomal protein uS2 family.

This Treponema pallidum (strain Nichols) protein is Small ribosomal subunit protein uS2 (rpsB).